The chain runs to 145 residues: MKYNTRLGEIEINENEIITFEKGIPGFEHLRKFSVISLKDTLPILWLVSLEDENVSLPIIDPWIVDKNYEIEISNEDIKELEIEDKEKVAVWAILTIPSGHPEETTVNLRAPIVINMEKGKGKQIILDTEKYKIKHKLSEFSFQE.

This sequence belongs to the FliW family. As to quaternary structure, interacts with translational regulator CsrA and flagellin(s).

The protein resides in the cytoplasm. In terms of biological role, acts as an anti-CsrA protein, binds CsrA and prevents it from repressing translation of its target genes, one of which is flagellin. Binds to flagellin and participates in the assembly of the flagellum. The sequence is that of Flagellar assembly factor FliW from Thermosipho africanus (strain TCF52B).